A 326-amino-acid polypeptide reads, in one-letter code: MSFLSGLFGPICEIEVALNDSDTRKVSEIKTEEGKVEKHFLFYDGESVAGKVNIVFKQPGKRLEHHGIRIEFVGQIELFNDKSNTHEFVNLVKELALPGELTQSRSYDFEFMQVEKPYESYNGANVRLRYFLKVTIVRRLTDLVKEYDLIVHQLASYPDVNNSIKMEVGIEDCLHIEFEYNKSKYHLKDVIVGKIYFLLVRIKIQHMELQLIKKEITGIGPSTTTETETVAKYEIMDGAPVKGESIPIRLFIAGYDPTPTMRDVNKKFSVRYFLNLVLVDEEDRRYFKQQEIILWRKAPEKIRKRTNFHQRFEPQEPQASAEEPEI.

Belongs to the VPS26 family. Component of the heterotrimeric retromer cargo-selective complex (CSC) which is believed to associate with variable sorting nexins to form functionally distinct retromer complex variants.

The protein localises to the cytoplasm. Its subcellular location is the endosome membrane. The protein resides in the early endosome. Its function is as follows. Acts as a component of the retromer cargo-selective complex (CSC). The CSC is believed to be the core functional component of retromer or respective retromer complex variants acting to prevent missorting of selected transmembrane cargo proteins into the lysosomal degradation pathway. Retromer mediates retrograde transport of cargo proteins from endosomes to the trans-Golgi network (TGN). The polypeptide is Vacuolar protein sorting-associated protein 26A-B (vps26a-b) (Xenopus laevis (African clawed frog)).